The following is a 239-amino-acid chain: Sugar fermentation stimulation protein homolog (239 aa).

Belongs to the SfsA family.

In Alcanivorax borkumensis (strain ATCC 700651 / DSM 11573 / NCIMB 13689 / SK2), this protein is Sugar fermentation stimulation protein homolog.